The following is a 553-amino-acid chain: Salicylyl-CoA synthase / salicylate adenylyltransferase (553 aa).

Residue G203 participates in ATP binding. Substrate is bound at residue H246–N247. ATP-binding residues include G320, V342, D426, R441, and K533. Residue K533 participates in substrate binding.

Belongs to the ATP-dependent AMP-binding enzyme family.

It catalyses the reaction salicylate + ATP + CoA = 2-hydroxybenzoyl-CoA + AMP + diphosphate. Involved in the degradation of salicylate via a pathway involving coenzyme A derivative. Catalyzes the conversion of salicylate to salicyloyl-CoA via the formation of a salicylate-adenylate intermediate. The substrate specificity is strong, since benzoate, 3-hydroxybenzoate, 4-hydroxybenzoate, gentisate, 2-aminobenzoate, aminobenzoate, salicylamide, salicylaldoxime and 2-hydroxyphenyl acetate cannot substitute for salicylate. In Streptomyces sp, this protein is Salicylyl-CoA synthase / salicylate adenylyltransferase.